The chain runs to 137 residues: ATP synthase epsilon chain (137 aa).

The protein belongs to the ATPase epsilon chain family. F-type ATPases have 2 components, CF(1) - the catalytic core - and CF(0) - the membrane proton channel. CF(1) has five subunits: alpha(3), beta(3), gamma(1), delta(1), epsilon(1). CF(0) has three main subunits: a, b and c.

It localises to the cell inner membrane. Produces ATP from ADP in the presence of a proton gradient across the membrane. In Yersinia pestis bv. Antiqua (strain Antiqua), this protein is ATP synthase epsilon chain.